Reading from the N-terminus, the 226-residue chain is Phosphoribosylformylglycinamidine synthase subunit PurQ (226 aa).

A Glutamine amidotransferase type-1 domain is found at 3-225 (FAVIVFPGSN…VKWGARHVTY (223 aa)). Cysteine 86 functions as the Nucleophile in the catalytic mechanism. Active-site residues include histidine 194 and glutamate 196.

In terms of assembly, part of the FGAM synthase complex composed of 1 PurL, 1 PurQ and 2 PurS subunits.

The protein resides in the cytoplasm. The enzyme catalyses N(2)-formyl-N(1)-(5-phospho-beta-D-ribosyl)glycinamide + L-glutamine + ATP + H2O = 2-formamido-N(1)-(5-O-phospho-beta-D-ribosyl)acetamidine + L-glutamate + ADP + phosphate + H(+). The catalysed reaction is L-glutamine + H2O = L-glutamate + NH4(+). It participates in purine metabolism; IMP biosynthesis via de novo pathway; 5-amino-1-(5-phospho-D-ribosyl)imidazole from N(2)-formyl-N(1)-(5-phospho-D-ribosyl)glycinamide: step 1/2. Functionally, part of the phosphoribosylformylglycinamidine synthase complex involved in the purines biosynthetic pathway. Catalyzes the ATP-dependent conversion of formylglycinamide ribonucleotide (FGAR) and glutamine to yield formylglycinamidine ribonucleotide (FGAM) and glutamate. The FGAM synthase complex is composed of three subunits. PurQ produces an ammonia molecule by converting glutamine to glutamate. PurL transfers the ammonia molecule to FGAR to form FGAM in an ATP-dependent manner. PurS interacts with PurQ and PurL and is thought to assist in the transfer of the ammonia molecule from PurQ to PurL. This chain is Phosphoribosylformylglycinamidine synthase subunit PurQ, found in Exiguobacterium sp. (strain ATCC BAA-1283 / AT1b).